Here is a 219-residue protein sequence, read N- to C-terminus: Probable GTP-binding protein EngB (219 aa).

The EngB-type G domain maps to 24 to 207 (VQPEIAFAGR…HELIESWLRP (184 aa)). Residues 32 to 39 (GRSNAGKS), 59 to 63 (GRTQH), 81 to 84 (DLPG), 148 to 151 (TKCD), and 186 to 188 (FSA) each bind GTP. The Mg(2+) site is built by serine 39 and threonine 61.

This sequence belongs to the TRAFAC class TrmE-Era-EngA-EngB-Septin-like GTPase superfamily. EngB GTPase family. It depends on Mg(2+) as a cofactor.

Necessary for normal cell division and for the maintenance of normal septation. In Burkholderia vietnamiensis (strain G4 / LMG 22486) (Burkholderia cepacia (strain R1808)), this protein is Probable GTP-binding protein EngB.